The following is a 212-amino-acid chain: MLILTVSPDQYQHQNSYLKQMHRLRAEVFGNRLKWDVAIEDGGERDQYDELSPTYILATFGGQRVVGCARLLAPSGPTMLERTFPQLLATGSLSATTAMIETSRFCVDTTLPTGRAGRQLHLATLTMFAGIIEWSMANGYDEIVTATDLRFERILKRAGWPMTRLGEPVAIGNTVAVAGHLPADRKSFERVCPPGYRSIIADDNGRPLRSAA.

It belongs to the autoinducer synthase family.

It catalyses the reaction a fatty acyl-[ACP] + S-adenosyl-L-methionine = an N-acyl-L-homoserine lactone + S-methyl-5'-thioadenosine + holo-[ACP] + H(+). Required for the synthesis of OHHL (N-(3-oxohexanoyl)-L-homoserine lactone), an autoinducer molecule which binds to TraR and thus acts in the control of conjugal transfer. The sequence is that of Acyl-homoserine-lactone synthase (traI) from Rhizobium radiobacter (Agrobacterium tumefaciens).